The following is a 238-amino-acid chain: Probable rhamnogalacturonate lyase B (238 aa).

Residues 1-19 form the signal peptide; that stretch reads MRLRTSLGVASACASVASA. Asn27, Asn110, and Asn143 each carry an N-linked (GlcNAc...) asparagine glycan.

The protein belongs to the polysaccharide lyase 4 family.

The protein localises to the secreted. The catalysed reaction is Endotype eliminative cleavage of L-alpha-rhamnopyranosyl-(1-&gt;4)-alpha-D-galactopyranosyluronic acid bonds of rhamnogalacturonan I domains in ramified hairy regions of pectin leaving L-rhamnopyranose at the reducing end and 4-deoxy-4,5-unsaturated D-galactopyranosyluronic acid at the non-reducing end.. Pectinolytic enzymes consist of four classes of enzymes: pectin lyase, polygalacturonase, pectin methylesterase and rhamnogalacturonase. Degrades the rhamnogalacturonan I (RG-I) backbone of pectin. This chain is Probable rhamnogalacturonate lyase B (rglB), found in Aspergillus oryzae (strain ATCC 42149 / RIB 40) (Yellow koji mold).